Consider the following 269-residue polypeptide: Integral membrane protein 2C (269 aa).

T39 bears the Phosphothreonine mark. Residues 57–77 (VGGVCYLSMGMVVLLMGLVFA) traverse the membrane as a helical; Signal-anchor for type II membrane protein segment. The region spanning 138 to 232 (FGGGDPADII…LCNGKDTYRL (95 aa)) is the BRICHOS domain. The cysteines at positions 165 and 224 are disulfide-linked. N-linked (GlcNAc...) asparagine glycosylation is present at N171.

This sequence belongs to the ITM2 family. In terms of assembly, interacts with BACE1. Interacts with APP. Interacts with STMN2. Type I membrane-bound, as well as soluble, furin has a pre-eminent role in ITM2C proteolytic processing. PCSK7 and PCSK5 may also be involved although to a lesser extent. The soluble form of PCSK7 is incapable of processing ITM2C. Fails to undergo shedding by ADAM10 and intramembrane cleavage by SPPL2B.

The protein resides in the lysosome membrane. Its subcellular location is the cell membrane. Functionally, negative regulator of amyloid-beta peptide production. May inhibit the processing of APP by blocking its access to alpha- and beta-secretase. Binding to the beta-secretase-cleaved APP C-terminal fragment is negligible, suggesting that ITM2C is a poor gamma-secretase cleavage inhibitor. May play a role in TNF-induced cell death and neuronal differentiation. In Rattus norvegicus (Rat), this protein is Integral membrane protein 2C (Itm2c).